Consider the following 859-residue polypeptide: Linoleate 9S-lipoxygenase B (859 aa).

The PLAT domain occupies 34–158; it reads INIGASVVDG…RYKSDRIFFA (125 aa). The Lipoxygenase domain occupies 161-859; it reads AYLPSETPQP…GKGIPNSVSI (699 aa). The disordered stretch occupies residues 213 to 246; that stretch reads EYARPILGGSSEYPYPRRGRTGREPTKADPNCES. Over residues 233 to 244 the composition is skewed to basic and acidic residues; the sequence is TGREPTKADPNC. Fe cation contacts are provided by His-521, His-526, His-711, and Ile-859.

This sequence belongs to the lipoxygenase family. Monomer. The cofactor is Fe cation. In terms of tissue distribution, fruit specific.

It localises to the cytoplasm. It catalyses the reaction (9Z,12Z)-octadecadienoate + O2 = (9S)-hydroperoxy-(10E,12Z)-octadecadienoate. It functions in the pathway lipid metabolism; oxylipin biosynthesis. In terms of biological role, plant lipoxygenase may be involved in a number of diverse aspects of plant physiology including growth and development, pest resistance, and senescence or responses to wounding. It catalyzes the hydroperoxidation of lipids containing a cis,cis-1,4-pentadiene structure. The sequence is that of Linoleate 9S-lipoxygenase B (LOX1.2) from Solanum lycopersicum (Tomato).